Here is a 213-residue protein sequence, read N- to C-terminus: Viral dihydrofolate reductase (213 aa).

Positions 4 to 184 (LLNCIVAVDQ…IKYKFEVYEK (181 aa)) constitute a DHFR domain. NADP(+) is bound by residues A10 and 16–22 (GIGKKGH). Substrate is bound at residue 31 to 36 (DFKYFQ). 54 to 56 (KNT) contributes to the NADP(+) binding site. A substrate-binding site is contributed by R70. NADP(+) is bound by residues 76 to 78 (SKK) and 116 to 123 (GGSSVYKD).

It belongs to the dihydrofolate reductase family.

The enzyme catalyses (6S)-5,6,7,8-tetrahydrofolate + NADP(+) = 7,8-dihydrofolate + NADPH + H(+). It functions in the pathway cofactor biosynthesis; tetrahydrofolate biosynthesis; 5,6,7,8-tetrahydrofolate from 7,8-dihydrofolate: step 1/1. Its function is as follows. Key enzyme in folate metabolism. Catalyzes an essential reaction for de novo glycine and purine synthesis, and for DNA precursor synthesis. In Saimiri sciureus (Common squirrel monkey), this protein is Viral dihydrofolate reductase (DHFR).